The chain runs to 87 residues: MVNMKASMFLTFAGLVLLFVVCYASESEEKEFPKEMLSSIFAVDKDFKQEERDCAGYMRECKEKLCCSGYVCSSRWKWCVLPAPWRR.

The signal sequence occupies residues 1–24; sequence MVNMKASMFLTFAGLVLLFVVCYA. Residues 25 to 52 constitute a propeptide that is removed on maturation; that stretch reads SESEEKEFPKEMLSSIFAVDKDFKQEER. Disulfide bonds link C54-C67, C61-C72, and C66-C79.

Belongs to the neurotoxin 10 (Hwtx-1) family. 51 (Hntx-8) subfamily. Hntx-8 sub-subfamily. Expressed by the venom gland.

Its subcellular location is the secreted. In terms of biological role, ion channel inhibitor. This chain is U3-theraphotoxin-Hhn1a 12, found in Cyriopagopus hainanus (Chinese bird spider).